The primary structure comprises 116 residues: Endocuticle structural glycoprotein ABD-4 (116 aa).

Q1 is subject to Pyrrolidone carboxylic acid. A Chitin-binding type R&amp;R domain is found at 20–92 (DGSYQWNYET…PQGAHFPTPP (73 aa)). The disordered stretch occupies residues 78–97 (ENGFVPQGAHFPTPPPIPPA). The O-linked (GalNAc) threonine; in ADB-4A, ABD-4B and ABD-4C glycan is linked to T90. T107 carries O-linked (GalNAc) threonine; in ADB-4A and ABD-4B glycosylation. O-linked (GalNAc) threonine; in ADB-4A glycosylation occurs at T111. P116 carries the proline amide modification.

Post-translationally, 3 variants exists that arise from a sequential glycosylation with N-acetylgalactosamine at three (ABD-4A), two (ABD-4B) or one (ABD-4C) threonine residues.

Component of the soft endocuticle of migratory locust. The sequence is that of Endocuticle structural glycoprotein ABD-4 from Locusta migratoria (Migratory locust).